Consider the following 505-residue polypeptide: Glycerol kinase 1 (505 aa).

ADP is bound at residue Thr-13. Thr-13, Thr-14, and Ser-15 together coordinate ATP. Residue Thr-13 participates in sn-glycerol 3-phosphate binding. Residue Arg-17 participates in ADP binding. Arg-83, Glu-84, and Tyr-135 together coordinate sn-glycerol 3-phosphate. Arg-83, Glu-84, and Tyr-135 together coordinate glycerol. The residue at position 231 (His-231) is a Phosphohistidine; by HPr. Residue Asp-245 participates in sn-glycerol 3-phosphate binding. Positions 245 and 246 each coordinate glycerol. The ADP site is built by Thr-267 and Gly-310. Thr-267, Gly-310, Gln-314, and Gly-411 together coordinate ATP. Residues Gly-411 and Asn-415 each contribute to the ADP site.

The protein belongs to the FGGY kinase family. As to quaternary structure, homotetramer and homodimer (in equilibrium). Post-translationally, the phosphoenolpyruvate-dependent sugar phosphotransferase system (PTS), including enzyme I, and histidine-containing protein (HPr) are required for the phosphorylation, which leads to the activation of the enzyme.

The enzyme catalyses glycerol + ATP = sn-glycerol 3-phosphate + ADP + H(+). It participates in polyol metabolism; glycerol degradation via glycerol kinase pathway; sn-glycerol 3-phosphate from glycerol: step 1/1. Activated by phosphorylation and inhibited by fructose 1,6-bisphosphate (FBP). Functionally, key enzyme in the regulation of glycerol uptake and metabolism. Catalyzes the phosphorylation of glycerol to yield sn-glycerol 3-phosphate. This is Glycerol kinase 1 from Lactiplantibacillus plantarum (strain ATCC BAA-793 / NCIMB 8826 / WCFS1) (Lactobacillus plantarum).